The sequence spans 543 residues: CTP synthase (543 aa).

The interval M1–L267 is amidoligase domain. CTP is bound at residue S15. UTP is bound at residue S15. ATP is bound by residues S16–I21 and D73. Residues D73 and E141 each contribute to the Mg(2+) site. CTP contacts are provided by residues D148–E150, K188–Q193, and K224. UTP-binding positions include K188–Q193 and K224. Positions K292–N543 constitute a Glutamine amidotransferase type-1 domain. Residue G354 coordinates L-glutamine. C381 (nucleophile; for glutamine hydrolysis) is an active-site residue. Residues L382–Q385, E405, and R473 each bind L-glutamine. Residues H516 and E518 contribute to the active site.

Belongs to the CTP synthase family. Homotetramer.

It carries out the reaction UTP + L-glutamine + ATP + H2O = CTP + L-glutamate + ADP + phosphate + 2 H(+). The catalysed reaction is L-glutamine + H2O = L-glutamate + NH4(+). It catalyses the reaction UTP + NH4(+) + ATP = CTP + ADP + phosphate + 2 H(+). Its pathway is pyrimidine metabolism; CTP biosynthesis via de novo pathway; CTP from UDP: step 2/2. Allosterically activated by GTP, when glutamine is the substrate; GTP has no effect on the reaction when ammonia is the substrate. The allosteric effector GTP functions by stabilizing the protein conformation that binds the tetrahedral intermediate(s) formed during glutamine hydrolysis. Inhibited by the product CTP, via allosteric rather than competitive inhibition. Its function is as follows. Catalyzes the ATP-dependent amination of UTP to CTP with either L-glutamine or ammonia as the source of nitrogen. Regulates intracellular CTP levels through interactions with the four ribonucleotide triphosphates. This Campylobacter jejuni subsp. jejuni serotype O:23/36 (strain 81-176) protein is CTP synthase.